The following is a 678-amino-acid chain: WD repeat-containing protein 48 (678 aa).

WD repeat units follow at residues Tyr28–Tyr67, His73–Thr112, Thr115–Ala154, Gly166–Lys205, Gly208–Thr247, Val250–Leu289, Glu292–Ser334, and Lys358–Asp397. Residues Val608–Glu629 are disordered. Residues Thr610–Glu621 show a composition bias toward low complexity.

It belongs to the WD repeat WDR48 family.

It is found in the nucleus. The protein localises to the cytoplasm. It localises to the lysosome. The protein resides in the late endosome. In terms of biological role, regulator of deubiquitinating complexes, which acts as a strong activator of usp1, usp12 and usp46. Enhances the usp1-mediated deubiquitination of fancd2; usp1 being almost inactive by itself. Activates deubiquitination by increasing the catalytic turnover without increasing the affinity of deubiquitinating enzymes for the substrate. Also activates deubiquitinating activity of complexes containing usp12. Together with rad51ap1, promotes DNA repair by stimulating rad51-mediated homologous recombination. Binds single-stranded DNA (ssDNA) and double-stranded DNA (dsDNA). DNA-binding is required both for usp1-mediated deubiquitination of fancd2 and stimulation of rad51-mediated homologous recombination: both wdr48/uaf1 and rad51ap1 have coordinated role in DNA-binding during these processes. Together with atad5 and by regulating usp1 activity, has a role in pcna-mediated translesion synthesis (TLS) by deubiquitinating monoubiquitinated pcna. Together with atad5, has a role in recruiting rad51 to stalled forks during replication stress. This is WD repeat-containing protein 48 (wdr48) from Xenopus tropicalis (Western clawed frog).